We begin with the raw amino-acid sequence, 82 residues long: Cytochrome b-c1 complex subunit 8 (82 aa).

Topologically, residues 1 to 39 are mitochondrial matrix; it reads MGREFGNLTRIRHVISYSLSPFEQRAFPHYFSKGIPNVL. Phosphoserine is present on Ser16. Lys33 is subject to N6-acetyllysine; alternate. Lys33 carries the N6-succinyllysine; alternate modification. Residues 40–68 form a helical membrane-spanning segment; that stretch reads RRTRERILRVAPPFVLFYLIYTWGNQEFA. At 69 to 82 the chain is on the mitochondrial intermembrane side; sequence QSKRKNPAKYENDK.

Belongs to the UQCRQ/QCR8 family. Component of the ubiquinol-cytochrome c oxidoreductase (cytochrome b-c1 complex, complex III, CIII), a multisubunit enzyme composed of 11 subunits. The complex is composed of 3 respiratory subunits cytochrome b, cytochrome c1 and Rieske protein UQCRFS1, 2 core protein subunits UQCRC1/QCR1 and UQCRC2/QCR2, and 6 low-molecular weight protein subunits UQCRH/QCR6, UQCRB/QCR7, UQCRQ/QCR8, UQCR10/QCR9, UQCR11/QCR10 and subunit 9, the cleavage product of Rieske protein UQCRFS1. The complex exists as an obligatory dimer and forms supercomplexes (SCs) in the inner mitochondrial membrane with NADH-ubiquinone oxidoreductase (complex I, CI) and cytochrome c oxidase (complex IV, CIV), resulting in different assemblies (supercomplex SCI(1)III(2)IV(1) and megacomplex MCI(2)III(2)IV(2)). Interacts with UQCC6.

Its subcellular location is the mitochondrion inner membrane. Component of the ubiquinol-cytochrome c oxidoreductase, a multisubunit transmembrane complex that is part of the mitochondrial electron transport chain which drives oxidative phosphorylation. The respiratory chain contains 3 multisubunit complexes succinate dehydrogenase (complex II, CII), ubiquinol-cytochrome c oxidoreductase (cytochrome b-c1 complex, complex III, CIII) and cytochrome c oxidase (complex IV, CIV), that cooperate to transfer electrons derived from NADH and succinate to molecular oxygen, creating an electrochemical gradient over the inner membrane that drives transmembrane transport and the ATP synthase. The cytochrome b-c1 complex catalyzes electron transfer from ubiquinol to cytochrome c, linking this redox reaction to translocation of protons across the mitochondrial inner membrane, with protons being carried across the membrane as hydrogens on the quinol. In the process called Q cycle, 2 protons are consumed from the matrix, 4 protons are released into the intermembrane space and 2 electrons are passed to cytochrome c. The chain is Cytochrome b-c1 complex subunit 8 (Uqcrq) from Rattus norvegicus (Rat).